Reading from the N-terminus, the 159-residue chain is Peptide deformylase (159 aa).

Fe cation-binding residues include Cys88 and His130. Glu131 is an active-site residue. Position 134 (His134) interacts with Fe cation.

The protein belongs to the polypeptide deformylase family. Requires Fe(2+) as cofactor.

It catalyses the reaction N-terminal N-formyl-L-methionyl-[peptide] + H2O = N-terminal L-methionyl-[peptide] + formate. In terms of biological role, removes the formyl group from the N-terminal Met of newly synthesized proteins. Requires at least a dipeptide for an efficient rate of reaction. N-terminal L-methionine is a prerequisite for activity but the enzyme has broad specificity at other positions. The sequence is that of Peptide deformylase from Caldanaerobacter subterraneus subsp. tengcongensis (strain DSM 15242 / JCM 11007 / NBRC 100824 / MB4) (Thermoanaerobacter tengcongensis).